We begin with the raw amino-acid sequence, 393 residues long: Bifunctional enzyme Fae/Hps (393 aa).

The segment at 1–161 is formaldehyde-activating enzyme; that stretch reads MYLIGEALIG…HEKDRAAHAV (161 aa). Histidine 17 functions as the Proton donor in the catalytic mechanism. Residues aspartate 19, leucine 48, lysine 66, threonine 68, and glutamine 83 each contribute to the substrate site. Residues 162–393 are 3-hexulose-6-phosphate synthase; the sequence is MGFKVPRLWD…IDQFRIMTDF (232 aa).

In the N-terminal section; belongs to the formaldehyde-activating enzyme family. It in the C-terminal section; belongs to the HPS/KGPDC family. HPS subfamily.

It catalyses the reaction 5,6,7,8-tetrahydromethanopterin + formaldehyde = 5,10-methylenetetrahydromethanopterin + H2O. It carries out the reaction D-ribulose 5-phosphate + formaldehyde = D-arabino-hex-3-ulose 6-phosphate. Its pathway is carbohydrate biosynthesis; D-ribose 5-phosphate biosynthesis. Functionally, catalyzes the condensation of formaldehyde with tetrahydromethanopterin (H(4)MPT) to 5,10-methylenetetrahydromethanopterin. In terms of biological role, catalyzes the reversible formation of ribulose-5-phosphate and formaldehyde from 3-hexulose-6-phosphate. The polypeptide is Bifunctional enzyme Fae/Hps (Methanospirillum hungatei JF-1 (strain ATCC 27890 / DSM 864 / NBRC 100397 / JF-1)).